A 227-amino-acid chain; its full sequence is Orotidine 5'-phosphate decarboxylase (227 aa).

Substrate contacts are provided by residues Asp-8, Lys-30, 58–67 (DLKVHDIPNT), Thr-117, Arg-177, Gln-186, Gly-206, and Arg-207. Catalysis depends on Lys-60, which acts as the Proton donor.

The protein belongs to the OMP decarboxylase family. Type 1 subfamily. In terms of assembly, homodimer.

It carries out the reaction orotidine 5'-phosphate + H(+) = UMP + CO2. Its pathway is pyrimidine metabolism; UMP biosynthesis via de novo pathway; UMP from orotate: step 2/2. Catalyzes the decarboxylation of orotidine 5'-monophosphate (OMP) to uridine 5'-monophosphate (UMP). This Campylobacter fetus subsp. fetus (strain 82-40) protein is Orotidine 5'-phosphate decarboxylase.